The primary structure comprises 979 residues: Glycine dehydrogenase (decarboxylating) (979 aa).

Lys-724 carries the N6-(pyridoxal phosphate)lysine modification.

It belongs to the GcvP family. In terms of assembly, the glycine cleavage system is composed of four proteins: P, T, L and H. Pyridoxal 5'-phosphate is required as a cofactor.

The enzyme catalyses N(6)-[(R)-lipoyl]-L-lysyl-[glycine-cleavage complex H protein] + glycine + H(+) = N(6)-[(R)-S(8)-aminomethyldihydrolipoyl]-L-lysyl-[glycine-cleavage complex H protein] + CO2. Its function is as follows. The glycine cleavage system catalyzes the degradation of glycine. The P protein binds the alpha-amino group of glycine through its pyridoxal phosphate cofactor; CO(2) is released and the remaining methylamine moiety is then transferred to the lipoamide cofactor of the H protein. This chain is Glycine dehydrogenase (decarboxylating), found in Nostoc punctiforme (strain ATCC 29133 / PCC 73102).